The sequence spans 618 residues: C2H2 finger domain transcription factor sebA (618 aa).

Residues 394 to 488 (GDATQSTEEM…RGRKQSLTDD (95 aa)) are disordered. The span at 406-416 (KKRVTSRRSLK) shows a compositional bias: basic residues. Composition is skewed to low complexity over residues 417–432 (KASTSESSSDSLAKKT) and 443–458 (SDTTSTVQQSTASSRQ). A compositionally biased stretch (polar residues) spans 459–469 (NSTANTSNSES). 2 consecutive C2H2-type zinc fingers follow at residues 493–516 (FVCSLCSRRFRRQEHLKRHYRSLH) and 522–544 (FECHECGKKFSRSDNLAQHARTH). Over residues 582–597 (NAATSKSTTSESSDGT) the composition is skewed to low complexity. The tract at residues 582–618 (NAATSKSTTSESSDGTISDTSSVGGRPAKKRRRDDHV) is disordered. The span at 608 to 618 (PAKKRRRDDHV) shows a compositional bias: basic residues.

It is found in the nucleus. Its subcellular location is the cytoplasm. Functionally, transcription factor that is involved in the response to heat shock, oxidative stress, and poor nutrient conditions. Controls expression of oxidative stress response genes such as ccp1, cat1, cat2, sod2; as well as of heat shock genes such as hsf1, hsp30 and hsp90. Negatively controls the expression of the fumiquinazoline (fmq) cluster via binding to the STRE motifs at the fmqA-D promoters. Plays a role in virulence. In Aspergillus fumigatus (strain ATCC MYA-4609 / CBS 101355 / FGSC A1100 / Af293) (Neosartorya fumigata), this protein is C2H2 finger domain transcription factor sebA.